Reading from the N-terminus, the 494-residue chain is Monocarboxylate transporter 1 (494 aa).

The Cytoplasmic portion of the chain corresponds to 1–22 (MPPAIGGPVGYTPPDGGWGWAV). The chain crosses the membrane as a helical span at residues 23-44 (VVGAFISIGFSYAFPKSITVFF). K38 contributes to the (S)-lactate binding site. At 45 to 55 (KEIEIIFSATT) the chain is on the extracellular side. Residues 56 to 80 (SEVSWISSIMLAVMYAGGPISSILV) form a helical membrane-spanning segment. Over 81–84 (NKYG) the chain is Cytoplasmic. A helical membrane pass occupies residues 85–105 (SRPVMIAGGCLSGCGLIAASF). Over 106–109 (CNTV) the chain is Extracellular. A helical transmembrane segment spans residues 110–132 (QELYFCIGVIGGLGLAFNLNPAL). Over 133-146 (TMIGKYFYKKRPLA) the chain is Cytoplasmic. The helical transmembrane segment at 147–169 (NGLAMAGSPVFLSTLAPLNQAFF) threads the bilayer. The Extracellular portion of the chain corresponds to 170 to 174 (GIFGW). A helical transmembrane segment spans residues 175–194 (RGSFLILGGLLLNCCVAGSL). Topologically, residues 195 to 254 (MRPIGPQQGKVEKLKSKESLQEAGKSDANTDLIGGSPKGEKLSVFQTVNKFLDLSLFTHR) are cytoplasmic. 3 positions are modified to phosphoserine: S210, S213, and S220. T224 carries the post-translational modification Phosphothreonine. Phosphoserine is present on S230. Residues 255–281 (GFLLYLSGNVVMFFGLFTPLVFLSNYG) traverse the membrane as a helical segment. Residues 282 to 288 (KSKHFSS) are Extracellular-facing. Residues 289-310 (EKSAFLLSILAFVDMVARPSMG) form a helical membrane-spanning segment. D302 is a H(+) binding site. Residue R306 participates in (S)-lactate binding. Residues 311-321 (LAANTRWIRPR) lie on the Cytoplasmic side of the membrane. Residues 322-342 (VQYFFAASVVANGVCHLLAPL) form a helical membrane-spanning segment. At 343-346 (STTY) the chain is on the extracellular side. A helical transmembrane segment spans residues 347–368 (VGFCIYAGVFGFAFGWLSSVLF). Residues 369-382 (ETLMDLVGPQRFSS) lie on the Cytoplasmic side of the membrane. A helical transmembrane segment spans residues 383-403 (AVGLVTIVECCPVLLGPPLLG). Residues 404–414 (RLNDMYGDYKY) are Extracellular-facing. A helical membrane pass occupies residues 415-436 (TYWACGVILIIAGLYLFIGMGI). The Cytoplasmic portion of the chain corresponds to 437–494 (NYRLVAKEQKAEEKKRDGKEDETSTDVDEKPKKTMKETQSPAPLQNSSGDPAEEESPV). Residues 446–472 (KAEEKKRDGKEDETSTDVDEKPKKTMK) show a composition bias toward basic and acidic residues. The disordered stretch occupies residues 446 to 494 (KAEEKKRDGKEDETSTDVDEKPKKTMKETQSPAPLQNSSGDPAEEESPV). T459 is subject to Phosphothreonine. S460 is subject to Phosphoserine. Phosphothreonine is present on T461. The segment covering 473–485 (ETQSPAPLQNSSG) has biased composition (polar residues). 4 positions are modified to phosphoserine: S476, S483, S484, and S492.

Belongs to the major facilitator superfamily. Monocarboxylate porter (TC 2.A.1.13) family. As to quaternary structure, interacts with BSG. Interacts with EMB. Interaction with either BSG or EMB is required for expression at the cell membrane. In terms of tissue distribution, detected in erythrocytes (at protein level). Detected in brain, heart, kidney, lung, muscle, jejunum enterocytes and brain capillaries.

Its subcellular location is the cell membrane. The protein localises to the basolateral cell membrane. It localises to the apical cell membrane. It carries out the reaction (S)-lactate(in) + H(+)(in) = (S)-lactate(out) + H(+)(out). The catalysed reaction is pyruvate(out) + H(+)(out) = pyruvate(in) + H(+)(in). The enzyme catalyses acetoacetate(out) + H(+)(out) = acetoacetate(in) + H(+)(in). It catalyses the reaction (S)-3-hydroxybutanoate(out) + H(+)(out) = (S)-3-hydroxybutanoate(in) + H(+)(in). It carries out the reaction (R)-3-hydroxybutanoate(out) + H(+)(out) = (R)-3-hydroxybutanoate(in) + H(+)(in). The catalysed reaction is 3-methyl-2-oxobutanoate(out) + H(+)(out) = 3-methyl-2-oxobutanoate(in) + H(+)(in). The enzyme catalyses 4-methyl-2-oxopentanoate(out) + H(+)(out) = 4-methyl-2-oxopentanoate(in) + H(+)(in). With respect to regulation, inhibited by stilbene disulfonates, such as di-isothiocyanostilbene disulfonate(DIDS), a cross-linking reagent that forms covalent linkages with lysine groups. Its function is as follows. Bidirectional proton-coupled monocarboxylate transporter. Catalyzes the rapid transport across the plasma membrane of many monocarboxylates such as lactate, pyruvate, acetate and the ketone bodies acetoacetate and beta-hydroxybutyrate, and thus contributes to the maintenance of intracellular pH. The transport direction is determined by the proton motive force and the concentration gradient of the substrate monocarboxylate. MCT1 is a major lactate exporter. Plays a role in cellular responses to a high-fat diet by modulating the cellular levels of lactate and pyruvate that contribute to the regulation of central metabolic pathways and insulin secretion, with concomitant effects on plasma insulin levels and blood glucose homeostasis. Facilitates the protonated monocarboxylate form of succinate export, that its transient protonation upon muscle cell acidification in exercising muscle and ischemic heart. Functions via alternate outward- and inward-open conformation states. Protonation and deprotonation of 302-Asp is essential for the conformational transition. The polypeptide is Monocarboxylate transporter 1 (Slc16a1) (Rattus norvegicus (Rat)).